Reading from the N-terminus, the 567-residue chain is MPKVEIYKNLFLDKVGKNFTNSEISELLEPFKAEFDGFDENSGKIKIEFNDTNRPDLWSYTGLARQIKTYFFGKIPCYDFFSKKGDFKKCYGEILVDNKMSQIRPFIFGFLAKGLIINDRMLEALIQFQEKLCQSYGQKRKRVAMGMYNSNFIKFPISYVASSPNHKFVPLGMDCELSLLEINEKHPKGLEYSHIIKNFDKYPLLLDDNNNVVSYPPIINSNNIGSLKVGDTDIFVEVTGIDFEATLLALSVVACDFYDMGFEILPVKTVFKKPFGLDFEELVCPYYFQEEVEFNVKNVNRLLGSNLTLERICLSLKKMGVNSYSRDLKNYVIPPFYRNDFLHEVDVIEDVMIGEGLASFHPELPKAFAVGRLSALEEFSRDIRNLMVGMGFQEMIYNYMGSKKDFIDRMNISDQNFLKVSNPMTENYEYIRASIIPNLLKSESVSSNFPYPHKIFEVGKIALKNLNTTIEGTNTFTNLAFLMSGKEISFNEINSIVATLFYYLNIEINLKESQANFYINGRGADIFLKDFNIGSFGEISPYVLNNFGIFIPCSVFEVNINKLMSRS.

The B5 domain occupies 287–362 (YFQEEVEFNV…IGEGLASFHP (76 aa)). Mg(2+) contacts are provided by Asp340, Asp346, Glu349, and Asp350.

This sequence belongs to the phenylalanyl-tRNA synthetase beta subunit family. Type 2 subfamily. Tetramer of two alpha and two beta subunits. Mg(2+) serves as cofactor.

Its subcellular location is the cytoplasm. The catalysed reaction is tRNA(Phe) + L-phenylalanine + ATP = L-phenylalanyl-tRNA(Phe) + AMP + diphosphate + H(+). The protein is Phenylalanine--tRNA ligase beta subunit of Borreliella afzelii (strain PKo) (Borrelia afzelii).